Reading from the N-terminus, the 135-residue chain is Actin-related protein 2/3 complex subunit 5B (135 aa).

Belongs to the ARPC5 family. Component of the Arp2/3 complex composed of ARP2, ARP3, ARPC1/p41-ARC, ARPC2/p34-ARC, ARPC3/p21-ARC, ARPC4/p20-ARC and ARPC5/p16-ARC.

The protein localises to the cytoplasm. It localises to the cytoskeleton. The protein resides in the cell projection. Functions as a component of the Arp2/3 complex which is involved in regulation of actin polymerization and together with an activating nucleation-promoting factor (NPF) mediates the formation of branched actin networks. Arp2/3 complex plays a critical role in the control of cell morphogenesis via the modulation of cell polarity development. In Arabidopsis thaliana (Mouse-ear cress), this protein is Actin-related protein 2/3 complex subunit 5B (ARPC5B).